Reading from the N-terminus, the 438-residue chain is GTPase Der (438 aa).

EngA-type G domains are found at residues 4-168 (PIVA…KNEG) and 177-352 (IKIA…DNYC). Residues 10 to 17 (GRPNVGKS), 57 to 61 (DTGGI), 120 to 123 (NKID), 183 to 190 (GKPNVGKS), 230 to 234 (DTAGV), and 295 to 298 (NKWD) contribute to the GTP site. The KH-like domain maps to 353 to 437 (KQIKTGILND…GIKLEFRERK (85 aa)).

It belongs to the TRAFAC class TrmE-Era-EngA-EngB-Septin-like GTPase superfamily. EngA (Der) GTPase family. As to quaternary structure, associates with the 50S ribosomal subunit.

Functionally, GTPase that plays an essential role in the late steps of ribosome biogenesis. The sequence is that of GTPase Der from Clostridium kluyveri (strain NBRC 12016).